We begin with the raw amino-acid sequence, 251 residues long: Imidazole glycerol phosphate synthase subunit HisF (251 aa).

Active-site residues include D11 and D130.

It belongs to the HisA/HisF family. Heterodimer of HisH and HisF.

The protein resides in the cytoplasm. It carries out the reaction 5-[(5-phospho-1-deoxy-D-ribulos-1-ylimino)methylamino]-1-(5-phospho-beta-D-ribosyl)imidazole-4-carboxamide + L-glutamine = D-erythro-1-(imidazol-4-yl)glycerol 3-phosphate + 5-amino-1-(5-phospho-beta-D-ribosyl)imidazole-4-carboxamide + L-glutamate + H(+). The protein operates within amino-acid biosynthesis; L-histidine biosynthesis; L-histidine from 5-phospho-alpha-D-ribose 1-diphosphate: step 5/9. IGPS catalyzes the conversion of PRFAR and glutamine to IGP, AICAR and glutamate. The HisF subunit catalyzes the cyclization activity that produces IGP and AICAR from PRFAR using the ammonia provided by the HisH subunit. The polypeptide is Imidazole glycerol phosphate synthase subunit HisF (Phocaeicola vulgatus (strain ATCC 8482 / DSM 1447 / JCM 5826 / CCUG 4940 / NBRC 14291 / NCTC 11154) (Bacteroides vulgatus)).